Reading from the N-terminus, the 452-residue chain is Glutathione gamma-glutamylcysteinyltransferase 2 (452 aa).

Residues 1–220 (MSMASLYRRS…GFMLISRPHR (220 aa)) form the Peptidase C83 domain. Positions 287 to 315 (EDVNQNLSSEEKSRLKLKQELLKQVQETK) form a coiled coil.

It belongs to the phytochelatin synthase family. Expressed in shoots, roots, leaves, stems and flowers.

The enzyme catalyses [Glu(-Cys)](n)-Gly + glutathione + H(+) = [Glu(-Cys)](n+1)-Gly + glycine. Its activity is regulated as follows. Requires cadmium for activity. Also activated in heterologous system by AsO(4)(3-) ions, but not by Cu(2+), Zn(2+), Mn(2+) or Ni(2+) ions. In terms of biological role, involved in the synthesis of phytochelatins (PC) and homophytochelatins (hPC), the heavy-metal-binding peptides of plants. This is Glutathione gamma-glutamylcysteinyltransferase 2 (PCS2) from Arabidopsis thaliana (Mouse-ear cress).